The following is a 245-amino-acid chain: Probable phosphatase KPK_3500 (245 aa).

9 residues coordinate Zn(2+): histidine 7, histidine 9, histidine 15, histidine 40, glutamate 73, histidine 101, histidine 131, aspartate 192, and histidine 194.

It belongs to the PHP family. In terms of assembly, homotrimer. Requires Zn(2+) as cofactor.

This chain is Probable phosphatase KPK_3500, found in Klebsiella pneumoniae (strain 342).